We begin with the raw amino-acid sequence, 186 residues long: Alkyl hydroperoxide reductase AhpD (186 aa).

Cys-132 serves as the catalytic Proton donor. Cys-132 and Cys-135 are disulfide-bonded. The Cysteine sulfenic acid (-SOH) intermediate role is filled by Cys-135.

The protein belongs to the AhpD family.

The catalysed reaction is N(6)-[(R)-dihydrolipoyl]-L-lysyl-[lipoyl-carrier protein] + a hydroperoxide = N(6)-[(R)-lipoyl]-L-lysyl-[lipoyl-carrier protein] + an alcohol + H2O. In terms of biological role, antioxidant protein with alkyl hydroperoxidase activity. Required for the reduction of the AhpC active site cysteine residues and for the regeneration of the AhpC enzyme activity. The sequence is that of Alkyl hydroperoxide reductase AhpD from Anaeromyxobacter sp. (strain K).